Here is a 576-residue protein sequence, read N- to C-terminus: Lysine--tRNA ligase (576 aa).

The Mg(2+) site is built by glutamate 412 and glutamate 419.

The protein belongs to the class-II aminoacyl-tRNA synthetase family. As to quaternary structure, homodimer. Mg(2+) is required as a cofactor.

It localises to the cytoplasm. It catalyses the reaction tRNA(Lys) + L-lysine + ATP = L-lysyl-tRNA(Lys) + AMP + diphosphate. In Phocaeicola vulgatus (strain ATCC 8482 / DSM 1447 / JCM 5826 / CCUG 4940 / NBRC 14291 / NCTC 11154) (Bacteroides vulgatus), this protein is Lysine--tRNA ligase.